The sequence spans 278 residues: 3-methyl-2-oxobutanoate hydroxymethyltransferase (278 aa).

Mg(2+) is bound by residues Asp43 and Asp82. 3-methyl-2-oxobutanoate contacts are provided by residues 43–44 (DS), Asp82, and Lys112. Glu114 serves as a coordination point for Mg(2+). The active-site Proton acceptor is the Glu181.

Belongs to the PanB family. In terms of assembly, homodecamer; pentamer of dimers. Requires Mg(2+) as cofactor.

It localises to the cytoplasm. It catalyses the reaction 3-methyl-2-oxobutanoate + (6R)-5,10-methylene-5,6,7,8-tetrahydrofolate + H2O = 2-dehydropantoate + (6S)-5,6,7,8-tetrahydrofolate. Its pathway is cofactor biosynthesis; (R)-pantothenate biosynthesis; (R)-pantoate from 3-methyl-2-oxobutanoate: step 1/2. In terms of biological role, catalyzes the reversible reaction in which hydroxymethyl group from 5,10-methylenetetrahydrofolate is transferred onto alpha-ketoisovalerate to form ketopantoate. This is 3-methyl-2-oxobutanoate hydroxymethyltransferase from Desulfitobacterium hafniense (strain Y51).